Here is a 108-residue protein sequence, read N- to C-terminus: Protein translation factor SUI1 (108 aa).

The segment at 1–20 is disordered; the sequence is MSIENLKSFDPFADTGDDEA.

This sequence belongs to the SUI1 family.

Additional factor that functions in concert with eIF-2 and the initiator tRNA in directing the ribosome to the proper start site of translation. The sequence is that of Protein translation factor SUI1 (SUI1A) from Eremothecium gossypii (strain ATCC 10895 / CBS 109.51 / FGSC 9923 / NRRL Y-1056) (Yeast).